Here is a 459-residue protein sequence, read N- to C-terminus: UDP-N-acetylmuramate--L-alanine ligase (459 aa).

Residue 118 to 124 (GTHGKTT) participates in ATP binding.

The protein belongs to the MurCDEF family.

The protein resides in the cytoplasm. The enzyme catalyses UDP-N-acetyl-alpha-D-muramate + L-alanine + ATP = UDP-N-acetyl-alpha-D-muramoyl-L-alanine + ADP + phosphate + H(+). Its pathway is cell wall biogenesis; peptidoglycan biosynthesis. Its function is as follows. Cell wall formation. The polypeptide is UDP-N-acetylmuramate--L-alanine ligase (Lachnospira eligens (strain ATCC 27750 / DSM 3376 / VPI C15-48 / C15-B4) (Eubacterium eligens)).